A 251-amino-acid chain; its full sequence is MSGPVRTEPLHGETPLLASSGSYSVVVLLRGYAEPQGVGDAVRADGTVTLVLPRGWVSDTSRRLAPSADGGAKTALEEAVRGPILVDTGGPWTRDALLEALATQGVAPGDVTLVVGTHGHSDHIGNLGLFPQAALLVSHDFCLPGGLYLPHGLCETQPLILGSGLQVWATPGHGGQRDVSVVVEGTSLGTVVVVGDVFERLGDEDSWQDLSEDPVAQQRSRERILSVADVVVPGHGAPFRVVREAVKSSED.

Zn(2+) is bound by residues His-118, His-120, Asp-122, His-123, His-173, Asp-196, and His-235.

This sequence belongs to the metallo-beta-lactamase superfamily. Glyoxalase II family. Homodimer. It depends on Zn(2+) as a cofactor.

The protein resides in the cytoplasm. The protein localises to the cytosol. It is found in the nucleus. The catalysed reaction is a ribonucleotidyl-ribonucleotide-RNA + H2O = a 3'-end ribonucleotide-RNA + a 5'-end 5'-phospho-ribonucleoside-RNA + H(+). In terms of biological role, endoribonuclease that catalyzes the hydrolysis of histone-coding pre-mRNA 3'-end. Involved in histone pre-mRNA processing during the S-phase of the cell cycle, which is required for entering/progressing through S-phase. Cleaves histone pre-mRNA at a major and a minor cleavage site after the 5'-ACCCA-3' and the 5'-ACCCACA-3' sequence, respectively, and located downstream of the stem-loop. May require the presence of the HDE element located at the histone pre-RNA 3'-end to avoid non-specific cleavage. The protein is Metallo-beta-lactamase domain-containing protein 1 (Mblac1) of Rattus norvegicus (Rat).